The following is a 239-amino-acid chain: Uridylate kinase (239 aa).

12 to 15 (KLSG) provides a ligand contact to ATP. Residues 20 to 25 (GDQGYG) form an involved in allosteric activation by GTP region. Glycine 54 is a UMP binding site. ATP contacts are provided by glycine 55 and arginine 59. UMP contacts are provided by residues aspartate 74 and 135–142 (TGNPYFTT). ATP contacts are provided by threonine 162, tyrosine 168, and aspartate 171.

This sequence belongs to the UMP kinase family. As to quaternary structure, homohexamer.

It localises to the cytoplasm. It catalyses the reaction UMP + ATP = UDP + ADP. Its pathway is pyrimidine metabolism; CTP biosynthesis via de novo pathway; UDP from UMP (UMPK route): step 1/1. Allosterically activated by GTP. Inhibited by UTP. Catalyzes the reversible phosphorylation of UMP to UDP. The polypeptide is Uridylate kinase (Geobacter metallireducens (strain ATCC 53774 / DSM 7210 / GS-15)).